The primary structure comprises 565 residues: Sensor histidine kinase YpdA (565 aa).

Over 1–3 (MHE) the chain is Cytoplasmic. The helical transmembrane segment at 4-24 (IFNMLLAVFDRAALMLICLFF) threads the bilayer. The Periplasmic portion of the chain corresponds to 25-45 (LIRIRLFRELLHKSAHSPKEL). A helical transmembrane segment spans residues 46 to 66 (LAVTAIFSLFALFSTWSGVPV). Residues 67–74 (EGSLVNVR) are Cytoplasmic-facing. The chain crosses the membrane as a helical span at residues 75–95 (IIAVMSGGILFGPWVGIITGV). The Periplasmic segment spans residues 96 to 107 (IAGIHRYLIDIG). Residues 108–128 (GVTAIPCFITSILAGCISGWI) traverse the membrane as a helical segment. Residues 129–139 (NLKIPKAQRWR) are Cytoplasmic-facing. A helical transmembrane segment spans residues 140 to 160 (VGILGGMLCETLTMILVIVWA). At 161 to 172 (PTTALGIDIVSK) the chain is on the periplasmic side. The chain crosses the membrane as a helical span at residues 173–193 (IGIPMILGSVCIGFIVLLVQS). At 194-565 (VEGEKEASAA…PVASQATLLL (372 aa)) the chain is on the cytoplasmic side. Residues 223–342 (VNSESLRKVC…AVGLSQIIST (120 aa)) form the GAF domain. The Histidine kinase domain occupies 343 to 554 (QLEVSRAEQL…EIAFYIPNQR (212 aa)). The residue at position 371 (histidine 371) is a Phosphohistidine; by autocatalysis.

In terms of assembly, interacts with BtsT and YhjX. Autophosphorylated.

It localises to the cell inner membrane. The catalysed reaction is ATP + protein L-histidine = ADP + protein N-phospho-L-histidine.. Member of the two-component regulatory system YpdA/YpdB, which is part of a nutrient-sensing regulatory network composed of YpdA/YpdB, the high-affinity pyruvate signaling system BtsS/BtsR and their respective target proteins, YhjX and BtsT. YpdA activates YpdB by phosphorylation in response to high concentrations of extracellular pyruvate. Activation of the YpdA/YpdB signaling cascade also promotes BtsS/BtsR-mediated btsT expression. The sequence is that of Sensor histidine kinase YpdA (ypdA) from Escherichia coli (strain K12).